The following is a 199-amino-acid chain: MLLLLTLAFLASPTCRAQNVLGNAAGKYFYVQGEDQGQLKGMRIFLSVFKFIKGFQLQFGSNWTDVYGTRSDNFIDFLLEDGEHVIKVEGSAVICLTSLTFTTNKGRVATFGVRRGRYFSDTGGSDKHLVTVNGMHAPGLCVRGIGFKWGNINANGNDHYNNKEDKADNKDADNKDADNKDDGDEDDDGNDDDDQKDES.

Positions 1-18 are cleaved as a signal peptide; the sequence is MLLLLTLAFLASPTCRAQ. The Jacalin-type lectin domain maps to 19–151; that stretch reads NVLGNAAGKY…VRGIGFKWGN (133 aa). Asparagine 62 carries N-linked (GlcNAc...) asparagine glycosylation. Residues 159 to 199 form a disordered region; the sequence is HYNNKEDKADNKDADNKDADNKDDGDEDDDGNDDDDQKDES. A compositionally biased stretch (basic and acidic residues) spans 160–180; it reads YNNKEDKADNKDADNKDADNK. Acidic residues predominate over residues 181 to 199; sequence DDGDEDDDGNDDDDQKDES.

This sequence to rat SBP. Prostate.

Functionally, this protein seems to be functional equivalent to rat prostatic spermine-binding protein, which is involved in polyamine binding. The sequence is that of Prostatic spermine-binding protein (Sbp) from Mus musculus (Mouse).